A 132-amino-acid chain; its full sequence is Small ribosomal subunit protein uS11 (132 aa).

The protein belongs to the universal ribosomal protein uS11 family. As to quaternary structure, part of the 30S ribosomal subunit. Interacts with proteins S7 and S18. Binds to IF-3.

In terms of biological role, located on the platform of the 30S subunit, it bridges several disparate RNA helices of the 16S rRNA. Forms part of the Shine-Dalgarno cleft in the 70S ribosome. The polypeptide is Small ribosomal subunit protein uS11 (Chlamydia abortus (strain DSM 27085 / S26/3) (Chlamydophila abortus)).